Here is a 241-residue protein sequence, read N- to C-terminus: 1-(5-phosphoribosyl)-5-[(5-phosphoribosylamino)methylideneamino] imidazole-4-carboxamide isomerase (241 aa).

Asp8 serves as the catalytic Proton acceptor. Asp131 functions as the Proton donor in the catalytic mechanism.

The protein belongs to the HisA/HisF family.

It localises to the cytoplasm. The catalysed reaction is 1-(5-phospho-beta-D-ribosyl)-5-[(5-phospho-beta-D-ribosylamino)methylideneamino]imidazole-4-carboxamide = 5-[(5-phospho-1-deoxy-D-ribulos-1-ylimino)methylamino]-1-(5-phospho-beta-D-ribosyl)imidazole-4-carboxamide. It participates in amino-acid biosynthesis; L-histidine biosynthesis; L-histidine from 5-phospho-alpha-D-ribose 1-diphosphate: step 4/9. This is 1-(5-phosphoribosyl)-5-[(5-phosphoribosylamino)methylideneamino] imidazole-4-carboxamide isomerase from Sorangium cellulosum (strain So ce56) (Polyangium cellulosum (strain So ce56)).